The primary structure comprises 345 residues: S-adenosylmethionine:tRNA ribosyltransferase-isomerase (345 aa).

Belongs to the QueA family. In terms of assembly, monomer.

Its subcellular location is the cytoplasm. The enzyme catalyses 7-aminomethyl-7-carbaguanosine(34) in tRNA + S-adenosyl-L-methionine = epoxyqueuosine(34) in tRNA + adenine + L-methionine + 2 H(+). The protein operates within tRNA modification; tRNA-queuosine biosynthesis. Functionally, transfers and isomerizes the ribose moiety from AdoMet to the 7-aminomethyl group of 7-deazaguanine (preQ1-tRNA) to give epoxyqueuosine (oQ-tRNA). This Anaeromyxobacter sp. (strain Fw109-5) protein is S-adenosylmethionine:tRNA ribosyltransferase-isomerase.